A 422-amino-acid polypeptide reads, in one-letter code: Protein phosphatase 1 regulatory subunit 36 (422 aa).

In terms of assembly, interacts with PPP1CA.

Inhibits phosphatase activity of protein phosphatase 1 (PP1) complexes. The chain is Protein phosphatase 1 regulatory subunit 36 (PPP1R36) from Homo sapiens (Human).